Here is a 436-residue protein sequence, read N- to C-terminus: UPF0597 protein YhaM (436 aa).

The protein belongs to the UPF0597 family.

The protein is UPF0597 protein YhaM of Escherichia coli O45:K1 (strain S88 / ExPEC).